Reading from the N-terminus, the 428-residue chain is Histidine--tRNA ligase (428 aa).

The protein belongs to the class-II aminoacyl-tRNA synthetase family. Homodimer.

It is found in the cytoplasm. It carries out the reaction tRNA(His) + L-histidine + ATP = L-histidyl-tRNA(His) + AMP + diphosphate + H(+). The polypeptide is Histidine--tRNA ligase (Bordetella pertussis (strain Tohama I / ATCC BAA-589 / NCTC 13251)).